The chain runs to 232 residues: Ovalbumin-related protein X (232 aa).

Belongs to the serpin family. Ov-serpin subfamily. Expressed in egg white (at protein level).

This is Ovalbumin-related protein X (SERPINB14C) from Gallus gallus (Chicken).